The chain runs to 277 residues: Tryptophan synthase alpha chain (277 aa).

Catalysis depends on proton acceptor residues glutamate 43 and glutamate 54.

The protein belongs to the TrpA family. Tetramer of two alpha and two beta chains.

The enzyme catalyses (1S,2R)-1-C-(indol-3-yl)glycerol 3-phosphate + L-serine = D-glyceraldehyde 3-phosphate + L-tryptophan + H2O. Its pathway is amino-acid biosynthesis; L-tryptophan biosynthesis; L-tryptophan from chorismate: step 5/5. Its function is as follows. The alpha subunit is responsible for the aldol cleavage of indoleglycerol phosphate to indole and glyceraldehyde 3-phosphate. The chain is Tryptophan synthase alpha chain from Haloferax volcanii (strain ATCC 29605 / DSM 3757 / JCM 8879 / NBRC 14742 / NCIMB 2012 / VKM B-1768 / DS2) (Halobacterium volcanii).